A 125-amino-acid chain; its full sequence is Ixonnexin (125 aa).

The signal sequence occupies residues 1-21; the sequence is MGLTGTTLVLVCVAFFGSAAA. The N-linked (GlcNAc...) asparagine glycan is linked to N26. Positions 81–125 are disordered; sequence TSSGGPDDTGDNTPPPTEKPKQKKKKPKKTKKPKRKSKKDQKENF. Over residues 101-119 the composition is skewed to basic residues; that stretch reads KQKKKKPKKTKKPKRKSKK.

This sequence belongs to the salp14 family. As to quaternary structure, homodimer. Interacts with host PLG. Interacts with host PLAT. In terms of tissue distribution, saliva (at protein level).

It localises to the secreted. Functionally, salivary protein that promotes host fibrinolysis via accelerating host plasmin generation from plasminogen (PLG) initiated by tPA/tissue-type plasminogen activator (PLAT). Does not affect urokinase (PLAU)-mediated fibrinolysis in the host. Enhances amidolytic activity of host coagulation factor Xa (F10). This Ixodes scapularis (Black-legged tick) protein is Ixonnexin.